The following is a 344-amino-acid chain: Transcription factor HHO3 (344 aa).

Disordered stretches follow at residues 90-122 and 156-212; these read KWSS…DKKK and AFQP…KQRR. A compositionally biased stretch (acidic residues) spans 97-106; sequence DETDKDEEAE. The span at 178-188 shows a compositional bias: low complexity; the sequence is TPTSTTTTSST. One can recognise an HTH myb-type domain in the interval 206 to 266; it reads SNRKQRRCWS…HLQKYRLHTR (61 aa). A DNA-binding region (H-T-H motif) is located at residues 237–262; it reads PKQIRDLMKVDGLTNDEVKSHLQKYR. Residues 306–344 are disordered; the sequence is PVATQPPQSSTSGERSNRGCKSPATSSTTTHTPHLLPLS. The span at 310 to 319 shows a compositional bias: polar residues; the sequence is QPPQSSTSGE. Positions 330–344 are enriched in low complexity; the sequence is TSSTTTHTPHLLPLS.

It is found in the nucleus. In terms of biological role, probable transcription factor involved in phosphate signaling in roots. The polypeptide is Transcription factor HHO3 (Arabidopsis thaliana (Mouse-ear cress)).